Here is a 233-residue protein sequence, read N- to C-terminus: Pilin-like protein PilA3 (233 aa).

Positions 1–4 (MKRG) are cleaved as a propeptide — leader sequence. Phenylalanine 5 is modified (N-methylphenylalanine). A helical membrane pass occupies residues 5–25 (FTLVEVLVAMAILVVVLAVGV). The disordered stretch occupies residues 121-143 (LRRSDVNATPSSGSDCTTPPPNS). A compositionally biased stretch (polar residues) spans 126–137 (VNATPSSGSDCT).

The protein localises to the cell inner membrane. Its subcellular location is the cell outer membrane. It is found in the periplasm. Its function is as follows. Plays an essential role in natural DNA transformation but is not required for pilus biogenesis. The polypeptide is Pilin-like protein PilA3 (pilA3) (Thermus thermophilus (strain ATCC BAA-163 / DSM 7039 / HB27)).